Here is a 338-residue protein sequence, read N- to C-terminus: Fructose-1,6-bisphosphatase class 1 (338 aa).

4 residues coordinate Mg(2+): glutamate 92, aspartate 115, leucine 117, and aspartate 118. Residues 118-121 (DGSS), asparagine 211, tyrosine 244, and lysine 274 contribute to the substrate site. Glutamate 280 provides a ligand contact to Mg(2+).

The protein belongs to the FBPase class 1 family. As to quaternary structure, homotetramer. Mg(2+) serves as cofactor.

Its subcellular location is the cytoplasm. It catalyses the reaction beta-D-fructose 1,6-bisphosphate + H2O = beta-D-fructose 6-phosphate + phosphate. Its pathway is carbohydrate biosynthesis; gluconeogenesis. In Photobacterium profundum (strain SS9), this protein is Fructose-1,6-bisphosphatase class 1.